We begin with the raw amino-acid sequence, 457 residues long: Secreted RxLR effector protein 8 (457 aa).

A signal peptide spans 1–19; it reads MRGTLATALLLVISSRVAT. Positions 48–69 match the RxLR-dEER motif; it reads RFLRGSRKQRDDLAPTAADENR. A glycan (N-linked (GlcNAc...) asparagine) is linked at asparagine 68. Disordered stretches follow at residues 110-188 and 398-457; these read RLSL…ALKS and RQTI…RSSS. A compositionally biased stretch (low complexity) spans 135–152; sequence SASTSTTSDIATSSSRTS. 2 stretches are compositionally biased toward polar residues: residues 153 to 163 and 176 to 187; these read NQRTPKTQASL and SKNQFKKSTALK. Residues 442 to 457 are compositionally biased toward basic residues; sequence IKSKDHARKKRPRSSS.

The protein belongs to the RxLR effector family.

It is found in the secreted. Its subcellular location is the host nucleus. Functionally, secreted effector that completely suppresses the host cell death induced by cell death-inducing proteins. This chain is Secreted RxLR effector protein 8, found in Plasmopara viticola (Downy mildew of grapevine).